The following is a 223-amino-acid chain: Pre-mRNA-splicing factor SPF27 (223 aa).

Positions 139-223 form a coiled coil; that stretch reads NENLLHMIDC…GENKENIEDY (85 aa).

This sequence belongs to the SPF27 family. As to quaternary structure, component of the pre-catalytic and catalytic spliceosome complexes. Component of the postcatalytic spliceosome P complex.

Its subcellular location is the nucleus. Functionally, required for pre-mRNA splicing as component of the activated spliceosome. May have a scaffolding role in the spliceosome assembly as it contacts all other components of the core complex. This is Pre-mRNA-splicing factor SPF27 (bcas2) from Xenopus tropicalis (Western clawed frog).